We begin with the raw amino-acid sequence, 334 residues long: Ornithine carbamoyltransferase (334 aa).

Carbamoyl phosphate contacts are provided by residues 56–59 (STRT), Gln-83, Arg-107, and 134–137 (HPTQ). L-ornithine is bound by residues Asn-168, Asp-232, and 236 to 237 (SM). Carbamoyl phosphate contacts are provided by residues 274-275 (CL) and Arg-320.

Belongs to the aspartate/ornithine carbamoyltransferase superfamily. OTCase family.

It is found in the cytoplasm. The enzyme catalyses carbamoyl phosphate + L-ornithine = L-citrulline + phosphate + H(+). The protein operates within amino-acid biosynthesis; L-arginine biosynthesis; L-arginine from L-ornithine and carbamoyl phosphate: step 1/3. Its function is as follows. Reversibly catalyzes the transfer of the carbamoyl group from carbamoyl phosphate (CP) to the N(epsilon) atom of ornithine (ORN) to produce L-citrulline. The polypeptide is Ornithine carbamoyltransferase (Shigella boydii serotype 4 (strain Sb227)).